We begin with the raw amino-acid sequence, 127 residues long: Large ribosomal subunit protein bL17 (127 aa).

This sequence belongs to the bacterial ribosomal protein bL17 family. As to quaternary structure, part of the 50S ribosomal subunit. Contacts protein L32.

The sequence is that of Large ribosomal subunit protein bL17 from Lactobacillus johnsonii (strain CNCM I-12250 / La1 / NCC 533).